A 202-amino-acid polypeptide reads, in one-letter code: ATP-dependent Clp protease proteolytic subunit (202 aa).

Serine 106 acts as the Nucleophile in catalysis. The active site involves histidine 131.

Belongs to the peptidase S14 family. Fourteen ClpP subunits assemble into 2 heptameric rings which stack back to back to give a disk-like structure with a central cavity, resembling the structure of eukaryotic proteasomes.

It is found in the cytoplasm. It catalyses the reaction Hydrolysis of proteins to small peptides in the presence of ATP and magnesium. alpha-casein is the usual test substrate. In the absence of ATP, only oligopeptides shorter than five residues are hydrolyzed (such as succinyl-Leu-Tyr-|-NHMec, and Leu-Tyr-Leu-|-Tyr-Trp, in which cleavage of the -Tyr-|-Leu- and -Tyr-|-Trp bonds also occurs).. Cleaves peptides in various proteins in a process that requires ATP hydrolysis. Has a chymotrypsin-like activity. Plays a major role in the degradation of misfolded proteins. In Verminephrobacter eiseniae (strain EF01-2), this protein is ATP-dependent Clp protease proteolytic subunit.